A 557-amino-acid chain; its full sequence is Dicarboxylate transporter 1, chloroplastic (557 aa).

Residues 1 to 69 (MASLALSGSC…STLVKASSTV (69 aa)) constitute a chloroplast transit peptide. The next 12 membrane-spanning stretches (helical) occupy residues 90–110 (AAIKPLLASIATGLILWFVPV), 122–142 (LAIFLATIVGIITQPLPLGAV), 158–178 (FAAAFSAFGDPIPWLIALAFF), 229–249 (AGGIFLPLVKSLCVACGSNVG), 256–276 (LGSWLMLTCFQTSVISSSMFL), 305–325 (AAIVPGLVSLIVVPFLLYLIY), 355–375 (IMAATLFLTVGLWIFGAKLGV), 376–396 (DAVTAAILGLSVLLVTGVVTW), 411–431 (WFAALIAMAGYLNKYGLIEWF), 438–458 (FVGGLGLSWQLSFGILVLLYF), 477–497 (AFLSVSTALGTPPYFAALVLA), and 531–551 (YGFLISIVNILIWLGVGGAWW).

It belongs to the SLC13A/DASS transporter (TC 2.A.47) family. DIT1 subfamily. Expressed in roots, rosette and cauline leaves, stems, flowers and siliques.

It localises to the plastid. Its subcellular location is the chloroplast inner membrane. Functionally, 2-oxoglutarate/malate translocator involved with DIT2-1 in primary ammonia assimilation and in the re-assimilation of ammonia generated by the photorespiratory pathway. Imports 2-oxoglutarate into plastids as precursor for ammonia assimilation. 2-oxoglutarate is converted to glutamate, the end product of ammonia assimilation, which is exported to the cytosol by DIT2-1. This chain is Dicarboxylate transporter 1, chloroplastic (DIT1), found in Arabidopsis thaliana (Mouse-ear cress).